We begin with the raw amino-acid sequence, 465 residues long: Cruciferin CRU4 (465 aa).

The N-terminal stretch at 1 to 22 (MGPTSLLSFFFTFLTLFHGFTA) is a signal peptide. Cystine bridges form between C29–C62 and C105–C283. Cupin type-1 domains follow at residues 34–236 (LNAL…ETAQ) and 289–438 (ENLD…QEAR). A Phosphothreonine modification is found at T108. The segment at 112 to 135 (SPVFGQGQGQEQGQGQGQGQGQGF) is disordered. Residues 117 to 133 (QGQGQEQGQGQGQGQGQ) show a composition bias toward gly residues. The residue at position 306 (Y306) is a Phosphotyrosine. S308 and S443 each carry phosphoserine.

This sequence belongs to the 11S seed storage protein (globulins) family. In terms of assembly, heterohexamer; each subunit is composed of an acidic and a basic chain derived from a single precursor and linked by a disulfide bond.

It localises to the rough endoplasmic reticulum. In terms of biological role, this is a seed storage protein. This is Cruciferin CRU4 (CRU4) from Brassica napus (Rape).